Here is a 121-residue protein sequence, read N- to C-terminus: Prefoldin subunit beta (121 aa).

The protein belongs to the prefoldin subunit beta family. Heterohexamer of two alpha and four beta subunits.

It is found in the cytoplasm. In terms of biological role, molecular chaperone capable of stabilizing a range of proteins. Seems to fulfill an ATP-independent, HSP70-like function in archaeal de novo protein folding. This is Prefoldin subunit beta from Methanosphaerula palustris (strain ATCC BAA-1556 / DSM 19958 / E1-9c).